Reading from the N-terminus, the 1188-residue chain is Oxysterol-binding protein homolog 1 (1188 aa).

3 ANK repeats span residues 51–80, 96–125, and 196–225; these read VLHL…STTN, NGNT…INDC, and TGDT…DPFK. Residues 330-379 form the PH domain; that stretch reads MSSCSLHLDSSEKLKFEIIGGNNGVIRWHLKGNHPIETNRWVWAIQGAIR. The residue at position 394 (Ser394) is a Phosphoserine. Disordered regions lie at residues 415–546 and 661–692; these read ATSK…GDED and QKKL…QEST. Residues 424–433 show a composition bias toward polar residues; sequence PHLSKSTLTQ. The span at 443–462 shows a compositional bias: low complexity; sequence TNNNNNKSNNDYDDNNNNNN. The span at 463-473 shows a compositional bias: acidic residues; it reads NDDDDYDDDDE. Phosphoserine occurs at positions 490 and 500. Over residues 514-529 the composition is skewed to acidic residues; that stretch reads PSDDEGYSEDDSDDDG. Residues Ser678, Ser683, and Ser691 each carry the phosphoserine modification. A phosphothreonine mark is found at Thr692 and Thr694. Phosphoserine occurs at positions 708 and 712. The FFAT motif lies at 716 to 722; the sequence is EFFDAEE. The interval 721-755 is disordered; sequence EEAASDKKANDSEDLTTNKETPANAKPQEEAPEDE. Residues 800 to 1174 form an OSBP-related domain (ORD) region; it reads LWSVLKSMVG…YWKFNGEYWN (375 aa). Ergosterol contacts are provided by Asp834 and Lys962.

It belongs to the OSBP family. Interacts with NVJ1. Interacts with the AAA ATPase AFG2; regulates OSH1 membrane association. AFG2 is required for membrane dissociation of OSH1. Interacts with SCS2.

It is found in the golgi apparatus membrane. The protein localises to the nucleus outer membrane. The protein resides in the endoplasmic reticulum membrane. Its subcellular location is the vacuole membrane. Functionally, lipid transport protein (LTP) involved in non-vesicular transfer of lipids between membranes. Functions in phosphoinositide-coupled directional transport of various lipids by carrying the lipid molecule in a hydrophobic pocket and transferring it between membranes through the cytosol. Involved in maintenance of intracellular sterol distribution and homeostasis. Involved in non-vesicular transport of ergosterol and PI(4)P at the NVJ. Binds sterol and PI4P in a mutually exclusive manner. May be involved in formation of PMN vesicles by altering the membrane lipid composition. The chain is Oxysterol-binding protein homolog 1 from Saccharomyces cerevisiae (strain ATCC 204508 / S288c) (Baker's yeast).